A 256-amino-acid polypeptide reads, in one-letter code: Protein YIPF7 (256 aa).

The Cytoplasmic segment spans residues 1–125; sequence MSNLAQFDSD…VDGSIMNETD (125 aa). Composition is skewed to polar residues over residues 18-31 and 38-48; these read IDNQEQSGNDSNAY and RKQQAGEQPQP. A disordered region spans residues 18–48; sequence IDNQEQSGNDSNAYGNLYGSRKQQAGEQPQP. The chain crosses the membrane as a helical span at residues 126–146; sequence LTGPILFCVALGATLLLAGKV. Position 147 (Gln-147) is a topological domain, extracellular. A helical transmembrane segment spans residues 148–168; sequence FGYVYGMSAIGCLVIHALLNL. Residues 169–172 lie on the Cytoplasmic side of the membrane; sequence MSSS. The helical transmembrane segment at 173-193 threads the bilayer; it reads GVSYGCVASVLGYCLLPMVIL. At 194–196 the chain is on the extracellular side; that stretch reads SGC. The helical transmembrane segment at 197–217 threads the bilayer; the sequence is AMFFSLQGIFGIMSSLVIIGW. The Cytoplasmic portion of the chain corresponds to 218–235; that stretch reads CSLSASKIFIAALHMEGQ. Residues 236-256 form a helical membrane-spanning segment; that stretch reads QLLVAYPCAILYGLFALLTIF.

Belongs to the YIP1 family.

It localises to the endoplasmic reticulum membrane. The protein resides in the golgi apparatus. It is found in the cis-Golgi network membrane. The protein localises to the trans-Golgi network membrane. This Homo sapiens (Human) protein is Protein YIPF7 (YIPF7).